Reading from the N-terminus, the 199-residue chain is NADH-ubiquinone oxidoreductase chain 6 (199 aa).

5 consecutive transmembrane segments (helical) span residues 1–21 (MILFYVFVVLALVSGAMVIRA), 27–47 (SVLFLILVFCNTSGLLVLLGL), 49–69 (FFAMIFLVVYVGAIAVLFLFV), 87–107 (YLPVGGIIGLIFLLEIFLMVD), and 150–170 (FFLFLVSSLILLVALIGAIVL).

It belongs to the complex I subunit 6 family.

It is found in the mitochondrion membrane. It carries out the reaction a ubiquinone + NADH + 5 H(+)(in) = a ubiquinol + NAD(+) + 4 H(+)(out). Its function is as follows. Core subunit of the mitochondrial membrane respiratory chain NADH dehydrogenase (Complex I) that is believed to belong to the minimal assembly required for catalysis. Complex I functions in the transfer of electrons from NADH to the respiratory chain. The immediate electron acceptor for the enzyme is believed to be ubiquinone. This chain is NADH-ubiquinone oxidoreductase chain 6 (ND6), found in Marchantia polymorpha (Common liverwort).